The primary structure comprises 94 residues: Co-chaperonin GroES (94 aa).

The protein belongs to the GroES chaperonin family. Heptamer of 7 subunits arranged in a ring. Interacts with the chaperonin GroEL.

It is found in the cytoplasm. Its function is as follows. Together with the chaperonin GroEL, plays an essential role in assisting protein folding. The GroEL-GroES system forms a nano-cage that allows encapsulation of the non-native substrate proteins and provides a physical environment optimized to promote and accelerate protein folding. GroES binds to the apical surface of the GroEL ring, thereby capping the opening of the GroEL channel. This is Co-chaperonin GroES from Staphylococcus aureus (strain Mu50 / ATCC 700699).